The chain runs to 594 residues: Spindle pole body-associated protein CIK1 (594 aa).

Residues 1-29 (MNNSKIPKLSFHSDPNNVTRDFPKTKRQK) are disordered. Residues 81 to 360 (IERVKNNERK…VNELEKVQQE (280 aa)) adopt a coiled-coil conformation.

In terms of assembly, interacts with KAR3; the interaction is direct.

It localises to the nucleus. It is found in the cytoplasm. Its subcellular location is the cytoskeleton. The protein localises to the microtubule organizing center. The protein resides in the spindle pole body. It localises to the spindle. Its function is as follows. Together with the minus end-directed microtubule motor KAR3, involved in spindle midzone assembly, karyogamy (nuclear fusion) during mating, and with an essential function in meiosis I. To contribute to spindle midzone assembly during mitotic metaphase, the KAR3-CIK1 motor cross-links anti-parallel microtubules to align them on the spindle axis; as the motor travels polewards splayed microtubules are pulled into alignment. During the karyogamy (nuclear fusion) step of mating, KAR3-CIK1 cross-links antiparallel cytoplasmic microtubules emanating from the spindle pole bodies of mating partners; the motor activity of KAR3 creates the force that pulls the nuclei together by sliding cross-linked microtubules past one another. KAR3-CIK1 promotes microtubule shortening predominantly from the microtubule plus-end. Required for interhomolog recombination, synapsis of homologous chromosomes and establishment of a meiosis I spindle. The polypeptide is Spindle pole body-associated protein CIK1 (CIK1) (Saccharomyces cerevisiae (strain ATCC 204508 / S288c) (Baker's yeast)).